The chain runs to 474 residues: 6-phospho-beta-galactosidase (474 aa).

Positions 18, 115, 159, 160, and 296 each coordinate D-galactose 6-phosphate. The active-site Proton donor is the Glu-160. Glu-374 serves as the catalytic Nucleophile. D-galactose 6-phosphate is bound by residues Ser-427, Trp-428, Lys-434, and Tyr-436.

The protein belongs to the glycosyl hydrolase 1 family.

The enzyme catalyses a 6-phospho-beta-D-galactoside + H2O = D-galactose 6-phosphate + an alcohol. It functions in the pathway carbohydrate metabolism; lactose degradation; D-galactose 6-phosphate and beta-D-glucose from lactose 6-phosphate: step 1/1. This chain is 6-phospho-beta-galactosidase, found in Clostridium acetobutylicum (strain ATCC 824 / DSM 792 / JCM 1419 / IAM 19013 / LMG 5710 / NBRC 13948 / NRRL B-527 / VKM B-1787 / 2291 / W).